Reading from the N-terminus, the 25-residue chain is Arginine attenuator peptide (25 aa).

Belongs to the arginine attenuator peptide family.

Functionally, arginine attenuator peptide (AAP) that has a regulatory role in the production of arginine-specific carbamoyl phosphate synthetase. Encoded by an upstream open reading frame (uORF) within the 5'-leader region of arginine-specific carbamoyl phosphate synthetase small chain (CPA1) mRNA, it attenuates the translation of the downstream CPA1 ORF. In the presence of high concentrations of arginine, ribosomes translating the uORF encoding AAP stall at the termination codon, resulting in reduced translation from the downstream CPA1 initiation codon. The polypeptide is Arginine attenuator peptide (Saccharomyces cerevisiae (strain ATCC 204508 / S288c) (Baker's yeast)).